The following is a 369-amino-acid chain: Glutamate 5-kinase (369 aa).

Lys-9 provides a ligand contact to ATP. Substrate-binding residues include Ser-49, Asp-136, and Asn-148. ATP-binding positions include Thr-168–Asp-169 and Thr-210–Lys-216. Residues Arg-275–Trp-355 enclose the PUA domain.

The protein belongs to the glutamate 5-kinase family.

It is found in the cytoplasm. The catalysed reaction is L-glutamate + ATP = L-glutamyl 5-phosphate + ADP. It participates in amino-acid biosynthesis; L-proline biosynthesis; L-glutamate 5-semialdehyde from L-glutamate: step 1/2. Catalyzes the transfer of a phosphate group to glutamate to form L-glutamate 5-phosphate. This chain is Glutamate 5-kinase, found in Neisseria meningitidis serogroup C / serotype 2a (strain ATCC 700532 / DSM 15464 / FAM18).